The sequence spans 308 residues: Ribosomal RNA large subunit methyltransferase F (308 aa).

This sequence belongs to the methyltransferase superfamily. METTL16/RlmF family.

The protein localises to the cytoplasm. The catalysed reaction is adenosine(1618) in 23S rRNA + S-adenosyl-L-methionine = N(6)-methyladenosine(1618) in 23S rRNA + S-adenosyl-L-homocysteine + H(+). In terms of biological role, specifically methylates the adenine in position 1618 of 23S rRNA. The sequence is that of Ribosomal RNA large subunit methyltransferase F from Escherichia coli O127:H6 (strain E2348/69 / EPEC).